A 126-amino-acid chain; its full sequence is Aspartate 1-decarboxylase (126 aa).

Ser-25 functions as the Schiff-base intermediate with substrate; via pyruvic acid in the catalytic mechanism. Ser-25 is modified (pyruvic acid (Ser)). Residue Thr-57 coordinates substrate. Residue Tyr-58 is the Proton donor of the active site. 72 to 74 (GAT) is a binding site for substrate.

Belongs to the PanD family. Heterooctamer of four alpha and four beta subunits. It depends on pyruvate as a cofactor. Post-translationally, is synthesized initially as an inactive proenzyme, which is activated by self-cleavage at a specific serine bond to produce a beta-subunit with a hydroxyl group at its C-terminus and an alpha-subunit with a pyruvoyl group at its N-terminus.

The protein resides in the cytoplasm. The enzyme catalyses L-aspartate + H(+) = beta-alanine + CO2. Its pathway is cofactor biosynthesis; (R)-pantothenate biosynthesis; beta-alanine from L-aspartate: step 1/1. Functionally, catalyzes the pyruvoyl-dependent decarboxylation of aspartate to produce beta-alanine. In Campylobacter jejuni subsp. doylei (strain ATCC BAA-1458 / RM4099 / 269.97), this protein is Aspartate 1-decarboxylase.